The chain runs to 308 residues: Pantothenate synthetase (308 aa).

39 to 46 (MGALHDGH) contributes to the ATP binding site. His-46 serves as the catalytic Proton donor. A (R)-pantoate-binding site is contributed by Gln-71. A beta-alanine-binding site is contributed by Gln-71. 157–160 (GEKD) is an ATP binding site. Gln-163 contributes to the (R)-pantoate binding site. ATP-binding positions include Val-186 and 194 to 197 (MSSR). The interval 286–308 (IETPAGTAGPDGDRQYAQSPWRN) is disordered.

This sequence belongs to the pantothenate synthetase family. Homodimer.

The protein localises to the cytoplasm. The catalysed reaction is (R)-pantoate + beta-alanine + ATP = (R)-pantothenate + AMP + diphosphate + H(+). It functions in the pathway cofactor biosynthesis; (R)-pantothenate biosynthesis; (R)-pantothenate from (R)-pantoate and beta-alanine: step 1/1. Catalyzes the condensation of pantoate with beta-alanine in an ATP-dependent reaction via a pantoyl-adenylate intermediate. The chain is Pantothenate synthetase from Mycolicibacterium paratuberculosis (strain ATCC BAA-968 / K-10) (Mycobacterium paratuberculosis).